The following is a 79-amino-acid chain: Acyl carrier protein (79 aa).

The Carrier domain maps to 2–77; sequence STIEERVKKI…QAIDYVKAHV (76 aa). S37 is modified (O-(pantetheine 4'-phosphoryl)serine).

This sequence belongs to the acyl carrier protein (ACP) family. In terms of processing, 4'-phosphopantetheine is transferred from CoA to a specific serine of apo-ACP by AcpS. This modification is essential for activity because fatty acids are bound in thioester linkage to the sulfhydryl of the prosthetic group.

Its subcellular location is the cytoplasm. It participates in lipid metabolism; fatty acid biosynthesis. Its function is as follows. Carrier of the growing fatty acid chain in fatty acid biosynthesis. This is Acyl carrier protein from Xanthomonas axonopodis pv. citri (strain 306).